A 717-amino-acid chain; its full sequence is Polyribonucleotide nucleotidyltransferase (717 aa).

Mg(2+)-binding residues include D486 and D492. The KH domain occupies 553 to 612 (PKIIQLQIDIDKISLVIGSTGKTVKAITDEFEVRVQIEQDGRITLFGTDSLKMQKAKARI). One can recognise an S1 motif domain in the interval 622–715 (GEIYEGVVKK…KFGKIELELV (94 aa)). The segment at 650–683 (SNRPKSRDDRYGDMRHSRYGSGRHSRYGRDSRNT) is disordered. Residues 654–665 (KSRDDRYGDMRH) are compositionally biased toward basic and acidic residues. The segment covering 666-675 (SRYGSGRHSR) has biased composition (basic residues).

Belongs to the polyribonucleotide nucleotidyltransferase family. Mg(2+) serves as cofactor.

The protein localises to the cytoplasm. The enzyme catalyses RNA(n+1) + phosphate = RNA(n) + a ribonucleoside 5'-diphosphate. Functionally, involved in mRNA degradation. Catalyzes the phosphorolysis of single-stranded polyribonucleotides processively in the 3'- to 5'-direction. The sequence is that of Polyribonucleotide nucleotidyltransferase from Borrelia turicatae (strain 91E135).